Reading from the N-terminus, the 202-residue chain is Urease accessory protein UreG (202 aa).

Residue Gly13–Thr20 participates in GTP binding.

The protein belongs to the SIMIBI class G3E GTPase family. UreG subfamily. As to quaternary structure, homodimer. UreD, UreF and UreG form a complex that acts as a GTP-hydrolysis-dependent molecular chaperone, activating the urease apoprotein by helping to assemble the nickel containing metallocenter of UreC. The UreE protein probably delivers the nickel.

Its subcellular location is the cytoplasm. In terms of biological role, facilitates the functional incorporation of the urease nickel metallocenter. This process requires GTP hydrolysis, probably effectuated by UreG. The protein is Urease accessory protein UreG of Dinoroseobacter shibae (strain DSM 16493 / NCIMB 14021 / DFL 12).